Here is a 730-residue protein sequence, read N- to C-terminus: Probable G-protein coupled receptor 149 (730 aa).

Residues 1-34 (MSFFLSNLTNDSRLWKVSHNSTDLMNSPETLTLS) are Extracellular-facing. N-linked (GlcNAc...) asparagine glycosylation is found at Asn-7, Asn-10, and Asn-20. The chain crosses the membrane as a helical span at residues 35–55 (LFCLICLMTLVALVGSIFSLV). The Cytoplasmic portion of the chain corresponds to 56-68 (SLLTMQYRTVVSM). A helical transmembrane segment spans residues 69–89 (LVTSWSVDDLLSVLSVAIFMV). Residues 90–108 (LQWPREAPGYFQSLCTTSA) lie on the Extracellular side of the membrane. Cysteines 104 and 181 form a disulfide. Residues 109-131 (LLYMCQGLSSNLKATLIVFYNFY) form a helical membrane-spanning segment. The Cytoplasmic segment spans residues 132 to 148 (TMHRTVVSQSSSWRSGQ). The chain crosses the membrane as a helical span at residues 149-169 (VLGVALTVWAVSLLLASLPLC). Residues 170–188 (GWGVFVRTPWGCLTDCSSP) are Extracellular-facing. A helical membrane pass occupies residues 189–209 (YVLLLFAVYASAFGLLAVLSV). The Cytoplasmic portion of the chain corresponds to 210–308 (PLTHQLLCSE…SFPVSLAQKR (99 aa)). The chain crosses the membrane as a helical span at residues 309–329 (FALILALTKVILWLPMMIHMV). Residues 330-340 (VKHVVGFQSLP) lie on the Extracellular side of the membrane. A helical membrane pass occupies residues 341–361 (VDMLSFLLTLLASTVTPVFVL). The Cytoplasmic portion of the chain corresponds to 362 to 730 (SKRWAHLPCG…RKREAESKGN (369 aa)).

It belongs to the G-protein coupled receptor 1 family. In terms of tissue distribution, expressed exclusively in brain and testis.

Its subcellular location is the cell membrane. Orphan receptor. This Rattus norvegicus (Rat) protein is Probable G-protein coupled receptor 149 (Gpr149).